Reading from the N-terminus, the 378-residue chain is Chorismate synthase (378 aa).

An NADP(+)-binding site is contributed by Arg50. FMN-binding positions include 127 to 129 (RAS), 255 to 256 (NA), Gly300, 315 to 319 (KPTPS), and Arg342.

This sequence belongs to the chorismate synthase family. FMNH2 serves as cofactor.

It catalyses the reaction 5-O-(1-carboxyvinyl)-3-phosphoshikimate = chorismate + phosphate. It participates in metabolic intermediate biosynthesis; chorismate biosynthesis; chorismate from D-erythrose 4-phosphate and phosphoenolpyruvate: step 7/7. Functionally, catalyzes the anti-1,4-elimination of the C-3 phosphate and the C-6 proR hydrogen from 5-enolpyruvylshikimate-3-phosphate (EPSP) to yield chorismate, which is the branch point compound that serves as the starting substrate for the three terminal pathways of aromatic amino acid biosynthesis. This reaction introduces a second double bond into the aromatic ring system. This chain is Chorismate synthase, found in Methanocaldococcus jannaschii (strain ATCC 43067 / DSM 2661 / JAL-1 / JCM 10045 / NBRC 100440) (Methanococcus jannaschii).